Consider the following 101-residue polypeptide: UPF0235 protein MMP1055 (101 aa).

This sequence belongs to the UPF0235 family.

The chain is UPF0235 protein MMP1055 from Methanococcus maripaludis (strain DSM 14266 / JCM 13030 / NBRC 101832 / S2 / LL).